Reading from the N-terminus, the 507-residue chain is MEEFQRYIELDRSWQHNFFYPLIFQEYIYGFAYDHGLNKSILLENAGDKKYSLLIVKRLINRMYQQTHLIISANHSNQNDFFGHKHKKNLYYQIISEGFAVIVEIPFSLLLISSLEAKEKKIVKSHNLRSIHSIFPFFEDKFLHLNYVLEILIPYPIHLEILVQTLRYWVKDASSLHLLRFFLYEYRNWNSLITPQKSISIFSNQRLFLFLYNFYVCEYESIFVFLCNQSSHLRSTSFGALLERNYFYGKLEYLVKVKTNTKDFCVILWLFKDPFLHYVRYRGKSILASKGTSLLMHKWKYYLFNFWQCHFSLWSPPRRIYINRLSKHSLDFMGFFSSVRLNSSVVRSQMVENSFLIDNPIKKFDTIVRIIPLVGSLAKAKFCNVLGHPISKSVWTDLLDSDIIDRFGRICRNLSHYYSGSSRKKSLYRIKYILRLSCARTLARKHKSTVRAFLKRLGSEFLEEFFTEEEKVLSLILPRDSSISRGLYRGPFWYLDIICIHDLANDE.

The protein belongs to the intron maturase 2 family. MatK subfamily.

It localises to the plastid. The protein resides in the chloroplast. Its function is as follows. Usually encoded in the trnK tRNA gene intron. Probably assists in splicing its own and other chloroplast group II introns. The sequence is that of Maturase K from Browningia hertlingiana (Cactus).